An 859-amino-acid polypeptide reads, in one-letter code: Heterogeneous nuclear ribonucleoprotein U-like protein 1 (859 aa).

The interval 1–103 (MDVRRLKVNE…GPDGHYVMDN (103 aa)) is necessary for interaction with HRMT1L1. Residues 3 to 37 (VRRLKVNELREELQRRGLDTRGLKAELAERLLAAL) enclose the SAP domain. Positions 36–131 (ALEAEEPEDE…SSYDRRPLDM (96 aa)) are disordered. Over residues 38 to 54 (EAEEPEDERELEADDDP) the composition is skewed to acidic residues. A compositionally biased stretch (pro residues) spans 77-88 (QPPPPGLQPHPE). Lys-117 participates in a covalent cross-link: Glycyl lysine isopeptide (Lys-Gly) (interchain with G-Cter in SUMO1); alternate. Lys-117 is covalently cross-linked (Glycyl lysine isopeptide (Lys-Gly) (interchain with G-Cter in SUMO2); alternate). The span at 118–130 (QENESSYDRRPLD) shows a compositional bias: basic and acidic residues. Residue Lys-143 forms a Glycyl lysine isopeptide (Lys-Gly) (interchain with G-Cter in SUMO1); alternate linkage. A Glycyl lysine isopeptide (Lys-Gly) (interchain with G-Cter in SUMO2); alternate cross-link involves residue Lys-143. Residues 146 to 206 (MKQEAPPSFL…QPPAEEDEDD (61 aa)) are disordered. Residues Lys-147 and Lys-163 each participate in a glycyl lysine isopeptide (Lys-Gly) (interchain with G-Cter in SUMO2) cross-link. Residues 174 to 193 (RPFEENRGRGYFEHREDRRG) show a composition bias toward basic and acidic residues. Residues 192 to 389 (RGRSPQPPAE…VEFNFGQRAE (198 aa)) enclose the B30.2/SPRY domain. Phosphoserine is present on Ser-195. The residue at position 210 (Thr-210) is a Phosphothreonine. Residues 214-859 (IDTYNCDLHF…GSTQGGTSTQ (646 aa)) are necessary for interaction with TP53. Glycyl lysine isopeptide (Lys-Gly) (interchain with G-Cter in SUMO2) cross-links involve residues Lys-271 and Lys-450. Residues 457 to 595 (NAIMDKMRVM…EEADKLVRQY (139 aa)) are necessary for interaction with BRD7 and transcriptional activation. Phosphoserine is present on Ser-513. A Glycyl lysine isopeptide (Lys-Gly) (interchain with G-Cter in SUMO2) cross-link involves residue Lys-540. Residues 595-612 (YNEEGRKAGPPPEKRFDS) show a composition bias toward basic and acidic residues. A disordered region spans residues 595–814 (YNEEGRKAGP…PPTAQTYPQP (220 aa)). Repeat copies occupy residues 613–615 (RGG), 620–622 (RGG), 639–641 (RGG), 645–647 (RGG), and 659–661 (RGG). Composition is skewed to gly residues over residues 613-626 (RGGG…GGGF) and 634-670 (PPGG…GGGY). A 5 X 3 AA repeats of R-G-G region spans residues 613 to 661 (RGGGFRGRGGGGGFQRYDNRGPPGGNRGGFQNRGGGGGSGGGGGNYRGG). A necessary for transcription repression region spans residues 613–661 (RGGGFRGRGGGGGFQRYDNRGPPGGNRGGFQNRGGGGGSGGGGGNYRGG). Asymmetric dimethylarginine is present on Arg-639. Residues Arg-645 and Arg-659 each carry the asymmetric dimethylarginine; alternate modification. Omega-N-methylarginine; alternate is present on residues Arg-645 and Arg-659. An omega-N-methylarginine mark is found at Arg-664 and Arg-674. A compositionally biased stretch (low complexity) spans 671-696 (NQNRWGNNNRDNNNSNNRGNYNRAPQ). Residues 697 to 720 (QQPPPQQPPPPQPPPQQPPPPPSY) show a composition bias toward pro residues. Ser-721 carries the post-translational modification Phosphoserine. Residues 728-744 (GASSYNKNSNIPGSSAN) are compositionally biased toward polar residues. Positions 745-775 (TSTPTVSSYTPPQPSYSQPPYNQGGYTQGYT) are enriched in low complexity. Composition is skewed to pro residues over residues 776 to 786 (APPPPPPPPPA) and 796 to 807 (NPAPYTPPPPPT).

Interacts with BRD7, PRMT2, TP53 and NXF1. Associates with histones and BRD7. In terms of processing, methylated.

The protein resides in the nucleus. Its function is as follows. Acts as a basic transcriptional regulator. Represses basic transcription driven by several virus and cellular promoters. When associated with BRD7, activates transcription of glucocorticoid-responsive promoter in the absence of ligand-stimulation. Also plays a role in mRNA processing and transport. Binds avidly to poly(G) and poly(C) RNA homopolymers in vitro. The polypeptide is Heterogeneous nuclear ribonucleoprotein U-like protein 1 (Hnrnpul1) (Mus musculus (Mouse)).